Reading from the N-terminus, the 225-residue chain is NAD(P)H-quinone oxidoreductase subunit K, chloroplastic (225 aa).

[4Fe-4S] cluster-binding residues include Cys-43, Cys-44, Cys-108, and Cys-139.

It belongs to the complex I 20 kDa subunit family. As to quaternary structure, NDH is composed of at least 16 different subunits, 5 of which are encoded in the nucleus. The cofactor is [4Fe-4S] cluster.

It localises to the plastid. The protein localises to the chloroplast thylakoid membrane. It catalyses the reaction a plastoquinone + NADH + (n+1) H(+)(in) = a plastoquinol + NAD(+) + n H(+)(out). It carries out the reaction a plastoquinone + NADPH + (n+1) H(+)(in) = a plastoquinol + NADP(+) + n H(+)(out). Functionally, NDH shuttles electrons from NAD(P)H:plastoquinone, via FMN and iron-sulfur (Fe-S) centers, to quinones in the photosynthetic chain and possibly in a chloroplast respiratory chain. The immediate electron acceptor for the enzyme in this species is believed to be plastoquinone. Couples the redox reaction to proton translocation, and thus conserves the redox energy in a proton gradient. The sequence is that of NAD(P)H-quinone oxidoreductase subunit K, chloroplastic from Barbarea verna (Land cress).